The following is a 420-amino-acid chain: UDP-N-acetylglucosamine 1-carboxyvinyltransferase (420 aa).

Lys-22–Asn-23 contributes to the phosphoenolpyruvate binding site. Arg-94 contacts UDP-N-acetyl-alpha-D-glucosamine. The active-site Proton donor is the Cys-118. 2-(S-cysteinyl)pyruvic acid O-phosphothioketal is present on Cys-118. Positions 306 and 328 each coordinate UDP-N-acetyl-alpha-D-glucosamine.

This sequence belongs to the EPSP synthase family. MurA subfamily.

It localises to the cytoplasm. The enzyme catalyses phosphoenolpyruvate + UDP-N-acetyl-alpha-D-glucosamine = UDP-N-acetyl-3-O-(1-carboxyvinyl)-alpha-D-glucosamine + phosphate. The protein operates within cell wall biogenesis; peptidoglycan biosynthesis. Cell wall formation. Adds enolpyruvyl to UDP-N-acetylglucosamine. The sequence is that of UDP-N-acetylglucosamine 1-carboxyvinyltransferase from Jannaschia sp. (strain CCS1).